Consider the following 97-residue polypeptide: Protein 9b (97 aa).

Positions 8–97 (VLPALHLVDP…PDEFVVVTAK (90 aa)) constitute a 9b domain.

Belongs to the coronavirus group 2 protein 9b family. Homodimer.

Its subcellular location is the host cytoplasmic vesicle membrane. The protein resides in the host cytoplasm. The chain is Protein 9b from Rhinolophus ferrumequinum (Greater horseshoe bat).